The following is a 296-amino-acid chain: Acetyl-coenzyme A carboxylase carboxyl transferase subunit beta (296 aa).

The CoA carboxyltransferase N-terminal domain occupies 25-294; it reads LWIKDPSTGE…NSDAPAPPEA (270 aa).

The protein belongs to the AccD/PCCB family. In terms of assembly, acetyl-CoA carboxylase is a heterohexamer composed of biotin carboxyl carrier protein (AccB), biotin carboxylase (AccC) and two subunits each of ACCase subunit alpha (AccA) and ACCase subunit beta (AccD).

It is found in the cytoplasm. It catalyses the reaction N(6)-carboxybiotinyl-L-lysyl-[protein] + acetyl-CoA = N(6)-biotinyl-L-lysyl-[protein] + malonyl-CoA. It functions in the pathway lipid metabolism; malonyl-CoA biosynthesis; malonyl-CoA from acetyl-CoA: step 1/1. In terms of biological role, component of the acetyl coenzyme A carboxylase (ACC) complex. Biotin carboxylase (BC) catalyzes the carboxylation of biotin on its carrier protein (BCCP) and then the CO(2) group is transferred by the transcarboxylase to acetyl-CoA to form malonyl-CoA. The chain is Acetyl-coenzyme A carboxylase carboxyl transferase subunit beta from Brucella ovis (strain ATCC 25840 / 63/290 / NCTC 10512).